The following is a 227-amino-acid chain: (S)-2-haloacid dehalogenase (227 aa).

The active-site Nucleophile is Asp10. An (S)-2-haloacid is bound by residues 11–12 (LY), Arg41, and 118–119 (SN). An important for catalytic activity region spans residues 175–180 (SSNAWD).

The protein belongs to the HAD-like hydrolase superfamily. S-2-haloalkanoic acid dehalogenase family. As to quaternary structure, homotetramer.

The catalysed reaction is an (S)-2-haloacid + H2O = a (2R)-2-hydroxycarboxylate + a halide anion + H(+). It carries out the reaction (S)-2-chloropropanoate + H2O = (R)-lactate + chloride + H(+). Functionally, catalyzes the hydrolytic dehalogenation of small (S)-2-haloalkanoic acids to yield the corresponding (R)-2-hydroxyalkanoic acids. Acts on acids of short chain lengths, C(2) to C(4), with inversion of configuration at C-2. Active with 2-halogenated carboxylic acids and converts only the S-isomer (or L-isomer) of 2-chloropropionic acid with inversion of configuration to produce R-lactate (or D-isomer). The sequence is that of (S)-2-haloacid dehalogenase from Pseudomonas putida (Arthrobacter siderocapsulatus).